Consider the following 326-residue polypeptide: Probable 9-O-acetyl-N-acetylneuraminic acid deacetylase (326 aa).

A signal peptide spans 1-21 (MNAIISPDYYYVLTVAGQSNA).

It localises to the periplasm. Its function is as follows. Probably catalyzes the hydrolysis of the 9-O-acetyl group of 9-O-acetyl-N-acetylneuraminate (Neu5,9Ac2). Is required for growth of E.coli on Neu5,9Ac2, an alternative sialic acid commonly found in mammalian host mucosal sites, in particular in the human intestine. This is Probable 9-O-acetyl-N-acetylneuraminic acid deacetylase (nanS) from Escherichia coli (strain K12).